The following is a 211-amino-acid chain: Imidazole glycerol phosphate synthase subunit HisH (211 aa).

Residues 3–211 (VIAVIDYDMG…VSQIKAPVLV (209 aa)) form the Glutamine amidotransferase type-1 domain. Cys81 functions as the Nucleophile in the catalytic mechanism. Residues His186 and Glu188 contribute to the active site.

As to quaternary structure, heterodimer of HisH and HisF.

It is found in the cytoplasm. It carries out the reaction 5-[(5-phospho-1-deoxy-D-ribulos-1-ylimino)methylamino]-1-(5-phospho-beta-D-ribosyl)imidazole-4-carboxamide + L-glutamine = D-erythro-1-(imidazol-4-yl)glycerol 3-phosphate + 5-amino-1-(5-phospho-beta-D-ribosyl)imidazole-4-carboxamide + L-glutamate + H(+). It catalyses the reaction L-glutamine + H2O = L-glutamate + NH4(+). It functions in the pathway amino-acid biosynthesis; L-histidine biosynthesis; L-histidine from 5-phospho-alpha-D-ribose 1-diphosphate: step 5/9. Its function is as follows. IGPS catalyzes the conversion of PRFAR and glutamine to IGP, AICAR and glutamate. The HisH subunit catalyzes the hydrolysis of glutamine to glutamate and ammonia as part of the synthesis of IGP and AICAR. The resulting ammonia molecule is channeled to the active site of HisF. The chain is Imidazole glycerol phosphate synthase subunit HisH from Cyanothece sp. (strain PCC 7425 / ATCC 29141).